We begin with the raw amino-acid sequence, 778 residues long: Pentatricopeptide repeat-containing protein At3g09650, chloroplastic (778 aa).

The N-terminal 65 residues, Met-1–Ser-65, are a transit peptide targeting the chloroplast. PPR repeat units follow at residues Asp-235 to Pro-269, Asp-270 to Val-304, and Cys-305 to Leu-339. The segment at Leu-351 to Ser-381 is disordered. Over residues Glu-355–Ser-372 the composition is skewed to acidic residues. PPR repeat units follow at residues Asp-413–Gln-443, Asp-451–Ala-485, Asn-486–Pro-521, Asp-522–Pro-556, Thr-557–Asp-587, Asp-593–Pro-627, and Asn-628–Arg-658.

This sequence belongs to the PPR family. P subfamily.

It localises to the plastid. The protein resides in the chloroplast stroma. Functionally, involved in the processing of polycistronic chloroplast psbB-psbT-psbH-petB-petD transcript. Could bind RNA. This Arabidopsis thaliana (Mouse-ear cress) protein is Pentatricopeptide repeat-containing protein At3g09650, chloroplastic (HCF152).